The chain runs to 299 residues: Peroxisomal biogenesis factor 19 (299 aa).

Positions 1 to 63 (MAAAEEGCSV…SPGDTAKDAL (63 aa)) are disordered. An N-acetylalanine modification is found at Ala-2. Residues 2 to 56 (AAAEEGCSVGAEADRELEELLESALDDFDKAKPSPAPPSTTTAPDASGPQKRSPG) are docking to the peroxisome membrane and binding to PEX3. The interval 2–91 (AAAEEGCSVG…QATAEFEKAM (90 aa)) is necessary for PEX19 function on peroxisome biogenesis. Over residues 16–27 (RELEELLESALD) the composition is skewed to acidic residues. Residues Ser-35, Ser-54, and Ser-66 each carry the phosphoserine modification. Phosphothreonine is present on Thr-236. Cys-296 bears the Cysteine methyl ester mark. Cys-296 carries S-farnesyl cysteine lipidation. The propeptide at 297 to 299 (LIM) is removed in mature form.

This sequence belongs to the peroxin-19 family. In terms of assembly, interacts with a broad range of peroxisomal membrane proteins, including PEX3, PEX10, PEX11A, PEX11B, PEX12, PEX13, PEX14 and PEX16, PXMP2/PMP22, PXMP4/PMP24, SLC25A17/PMP34, ABCD1/ALDP, ABCD2/ALDRP, and ABCD3/PMP70. Also interacts with the tumor suppressor CDKN2A/p19ARF. As to quaternary structure, (Microbial infection) Interacts with human cytomegalovirus protein UL37 isoform vMIA; this interaction inhibits the peroxisomal-dependent antiviral signaling. As to expression, ubiquitously expressed. Isoform 1 is strongly predominant in all tissues except in utero where isoform 2 is the main form.

It is found in the cytoplasm. The protein resides in the peroxisome membrane. Necessary for early peroxisomal biogenesis. Acts both as a cytosolic chaperone and as an import receptor for peroxisomal membrane proteins (PMPs). Binds and stabilizes newly synthesized PMPs in the cytoplasm by interacting with their hydrophobic membrane-spanning domains, and targets them to the peroxisome membrane by binding to the integral membrane protein PEX3. Excludes CDKN2A from the nucleus and prevents its interaction with MDM2, which results in active degradation of TP53. The protein is Peroxisomal biogenesis factor 19 of Homo sapiens (Human).